A 223-amino-acid polypeptide reads, in one-letter code: Ribonuclease T (223 aa).

Acidic residues predominate over residues 1-11 (MSDDHFDDEQE). The interval 1 to 21 (MSDDHFDDEQEGSSGGPRHPM) is disordered. The region spanning 31-205 (VVVDVETGGF…YDTEKTAELF (175 aa)) is the Exonuclease domain. 4 residues coordinate Mg(2+): aspartate 34, glutamate 36, histidine 192, and aspartate 197. Catalysis depends on histidine 192, which acts as the Proton donor/acceptor.

This sequence belongs to the RNase T family. As to quaternary structure, homodimer. Requires Mg(2+) as cofactor.

Functionally, trims short 3' overhangs of a variety of RNA species, leaving a one or two nucleotide 3' overhang. Responsible for the end-turnover of tRNA: specifically removes the terminal AMP residue from uncharged tRNA (tRNA-C-C-A). Also appears to be involved in tRNA biosynthesis. This Pseudomonas fluorescens (strain ATCC BAA-477 / NRRL B-23932 / Pf-5) protein is Ribonuclease T.